We begin with the raw amino-acid sequence, 911 residues long: Translation initiation factor IF-2 (911 aa).

Basic and acidic residues-rich tracts occupy residues 80 to 94 and 101 to 113; these read LEEQ…EQQL and RPER…RTEV. Disordered stretches follow at residues 80–142, 153–172, and 195–309; these read LEEQ…VSEP, VKSP…DVEG, and SSLG…KMRK. The segment covering 214–256 has biased composition (basic and acidic residues); sequence KEQADELKDEFDIKAKEGGKEREAGGESRKPVKKGSEETKKTT. The segment covering 262–272 has biased composition (basic residues); sequence AKKKKGKKKKK. The span at 273-284 shows a compositional bias: basic and acidic residues; that stretch reads PEVDEKTIEKNI. Over residues 286-300 the composition is skewed to low complexity; the sequence is STISGMDDTSGSGSS. The 171-residue stretch at 408–578 folds into the tr-type G domain; that stretch reads IRPPVVTIMG…LTEAEIRELK (171 aa). The interval 417–424 is G1; sequence GHVDHGKT. 417–424 is a GTP binding site; it reads GHVDHGKT. Residues 442 to 446 form a G2 region; sequence GITQH. The interval 464–467 is G3; sequence DTPG. GTP contacts are provided by residues 464–468 and 518–521; these read DTPGH and NKID. Residues 518–521 are G4; that stretch reads NKID. Residues 554-556 are G5; it reads SAK.

It belongs to the TRAFAC class translation factor GTPase superfamily. Classic translation factor GTPase family. IF-2 subfamily.

The protein resides in the cytoplasm. Its function is as follows. One of the essential components for the initiation of protein synthesis. Protects formylmethionyl-tRNA from spontaneous hydrolysis and promotes its binding to the 30S ribosomal subunits. Also involved in the hydrolysis of GTP during the formation of the 70S ribosomal complex. This Chlorobium phaeobacteroides (strain BS1) protein is Translation initiation factor IF-2.